We begin with the raw amino-acid sequence, 221 residues long: UPF0319 protein CGSHiGG_02140 (221 aa).

Positions 1–21 are cleaved as a signal peptide; sequence MKLRAVVLGLATLCTSTATFA.

It belongs to the UPF0319 family.

This Haemophilus influenzae (strain PittGG) protein is UPF0319 protein CGSHiGG_02140.